Consider the following 617-residue polypeptide: Probable Xaa-Pro aminopeptidase P (617 aa).

Residues D414, D425, E523, and E537 each contribute to the Mn(2+) site.

It belongs to the peptidase M24B family. Requires Mn(2+) as cofactor.

The enzyme catalyses Release of any N-terminal amino acid, including proline, that is linked to proline, even from a dipeptide or tripeptide.. In terms of biological role, catalyzes the removal of a penultimate prolyl residue from the N-termini of peptides. The chain is Probable Xaa-Pro aminopeptidase P (AMPP) from Ajellomyces capsulatus (strain NAm1 / WU24) (Darling's disease fungus).